The chain runs to 178 residues: Large ribosomal subunit protein uL6 (178 aa).

The protein belongs to the universal ribosomal protein uL6 family. Part of the 50S ribosomal subunit.

In terms of biological role, this protein binds to the 23S rRNA, and is important in its secondary structure. It is located near the subunit interface in the base of the L7/L12 stalk, and near the tRNA binding site of the peptidyltransferase center. In Francisella tularensis subsp. mediasiatica (strain FSC147), this protein is Large ribosomal subunit protein uL6.